Here is a 477-residue protein sequence, read N- to C-terminus: Dihydrolipoyl dehydrogenase 3 (477 aa).

FAD-binding positions include 39–47, Lys-56, and Ala-118; that span reads EKGEYGGAC. Cys-47 and Cys-52 are oxidised to a cystine. NAD(+) is bound by residues 186-190, Glu-209, and 279-282; these read GAGYI and AVGR. Positions 322 and 330 each coordinate FAD. The Proton acceptor role is filled by His-454.

The protein belongs to the class-I pyridine nucleotide-disulfide oxidoreductase family. In terms of assembly, homodimer. It depends on FAD as a cofactor.

It localises to the cytoplasm. The catalysed reaction is N(6)-[(R)-dihydrolipoyl]-L-lysyl-[protein] + NAD(+) = N(6)-[(R)-lipoyl]-L-lysyl-[protein] + NADH + H(+). In Haloarcula marismortui (strain ATCC 43049 / DSM 3752 / JCM 8966 / VKM B-1809) (Halobacterium marismortui), this protein is Dihydrolipoyl dehydrogenase 3 (lpdA3).